We begin with the raw amino-acid sequence, 93 residues long: MARSLKKGPFVDDHVMKKVIAAKKANDNKPIKTWSRRSTITPDMIGLTFNVHNGKSFIPVYITENHIGYKLGEFAPTRTFKGHKGSVQKKIGK.

This sequence belongs to the universal ribosomal protein uS19 family.

Its function is as follows. Protein S19 forms a complex with S13 that binds strongly to the 16S ribosomal RNA. The polypeptide is Small ribosomal subunit protein uS19 (Campylobacter jejuni subsp. jejuni serotype O:6 (strain 81116 / NCTC 11828)).